Reading from the N-terminus, the 120-residue chain is Secreted effector PIT2 (120 aa).

Positions 1-25 are cleaved as a signal peptide; it reads MLFRSAFVLLIVAFASACLVQHVQA. The PID14 protease inhibitor domain stretch occupies residues 46–59; sequence KLNRRWWFGFTGSL.

Interacts with host cysteine proteases CP1A, CP1B, XCP2 and CP2. In terms of processing, cleaved by host target papain-like cysteine proteases (PLCPs) to release the embedded inhibitor peptide PID14.

The protein localises to the secreted. Functionally, secreted effector required for virulence. Functions as an inhibitor of a set of apoplastic maize papain-like cysteine proteases (PLCPs) including CP1A, CP1B, XCP2 and CP2, whose activity is directly linked with salicylic-acid-associated plant defenses. Acts as a substrate mimicking molecule for apoplastic PLCPs and its processing releases the embedded inhibitor peptide PID14, which in turn blocks PLCPs to modulate host immunity. The polypeptide is Secreted effector PIT2 (Mycosarcoma maydis (Corn smut fungus)).